The sequence spans 483 residues: V-type proton ATPase subunit B 2 (483 aa).

It belongs to the ATPase alpha/beta chains family. As to quaternary structure, V-ATPase is a heteromultimeric enzyme composed of a peripheral catalytic V1 complex (main components: subunits A, B, C, D, E, and F) attached to an integral membrane V0 proton pore complex (main component: the proteolipid protein).

Its function is as follows. Non-catalytic subunit of the peripheral V1 complex of vacuolar ATPase. V-ATPase is responsible for acidifying a variety of intracellular compartments in eukaryotic cells. This Hordeum vulgare (Barley) protein is V-type proton ATPase subunit B 2.